A 625-amino-acid chain; its full sequence is Basic helix-loop-helix ARNT-like protein 1 (625 aa).

Residues 1-60 (MADQRMDISSTISDFMSPGPTDLLSSSLGTSGVDCNRKRKGSSTDYQESMDTDKDDPHGR) form a disordered region. Ser-17 carries the phosphoserine; by GSK3-beta modification. Positions 17-32 (SPGPTDLLSSSLGTSG) are enriched in low complexity. Thr-21 bears the Phosphothreonine; by GSK3-beta mark. The short motif at 36-41 (NRKRKG) is the Nuclear localization signal element. The segment covering 51-60 (DTDKDDPHGR) has biased composition (basic and acidic residues). Residues 72 to 125 (NAREAHSQIEKRRRDKMNSFIDELASLVPTCNAMSRKLDKLTVLRMAVQHMKTL) enclose the bHLH domain. Ser-78 is subject to Phosphoserine. Ser-90 is subject to Phosphoserine; by CK2. The Nuclear export signal 1 motif lies at 142-152 (LSDDELKHLIL). Residues 143 to 215 (SDDELKHLIL…EQLSSSDTAP (73 aa)) enclose the PAS 1 domain. Lys-252 is covalently cross-linked (Glycyl lysine isopeptide (Lys-Gly) (interchain with G-Cter in SUMO2 and SUMO3)). Lys-259 is covalently cross-linked (Glycyl lysine isopeptide (Lys-Gly) (interchain with G-Cter in SUMO); alternate). Residue Lys-259 forms a Glycyl lysine isopeptide (Lys-Gly) (interchain with G-Cter in SUMO2); alternate linkage. The PAS 2 domain maps to 325-395 (PQPVNGEIRV…ECHRQVLQTR (71 aa)). The Nuclear export signal 2 signature appears at 360–368 (LAYLPQELL). In terms of domain architecture, PAC spans 400–443 (TNCYKFKIKDGSFITLRSRWFSFMNPWTKEVEYIVSTNTVVLAN). Disordered stretches follow at residues 454–491 (QLTASPRSMDSMLPSGEGGPKRTHPTVPGIPGGTRAGA) and 510–594 (GSSP…SPSN). The segment at 507-587 (RIRGSSPSSC…IGIDMIDNDQ (81 aa)) is interaction with CIART. Low complexity predominate over residues 510–520 (GSSPSSCGSSP). An N6-acetyllysine modification is found at Lys-537.

As to quaternary structure, component of the circadian clock oscillator which includes the CRY1/2 proteins, CLOCK or NPAS2, BMAL1 or BMAL2, CSNK1D and/or CSNK1E, TIMELESS and the PER1/2/3 proteins. Forms a heterodimer with CLOCK. The CLOCK-BMAL1 heterodimer is required for E-box-dependent transactivation, for CLOCK nuclear translocation and degradation, and, for phosphorylation of both CLOCK and BMAL1. Part of a nuclear complex which also includes RACK1 and PRKCA; RACK1 and PRKCA are recruited to the complex in a circadian manner. Interacts with NPAS2. Interacts with EZH2. Interacts with SUMO3. Interacts with SIRT1. Interacts with AHR. Interacts with ID1, ID2 and ID3. Interacts with DDX4. Interacts with OGT. Interacts with EED and SUZ12. Interacts with MTA1. Interacts with CIART. Interacts with HSP90. Interacts with KAT2B and EP300. Interacts with BHLHE40/DEC1 and BHLHE41/DEC2. Interacts with RELB and the interaction is enhanced in the presence of CLOCK. Interacts with PER1, PER2, CRY1 and CRY2 and this interaction requires a translocation to the nucleus. Interaction of the CLOCK-BMAL1 heterodimer with PER or CRY inhibits transcription activation. Interaction of the CLOCK-BMAL1 with CRY1 is independent of DNA but with PER2 is off DNA. The CLOCK-BMAL1 heterodimer interacts with GSK3B. Interacts with KDM5A. Interacts with KMT2A; in a circadian manner. Interacts with UBE3A. Interacts with PRKCG. Interacts with MAGEL2. Interacts with NCOA2. Interacts with THRAP3. The CLOCK-BMAL1 heterodimer interacts with PASD1. Interacts with PASD1. Interacts with USP9X. Interacts with PIWIL2 (via PIWI domain). Interacts with HDAC3. Interacts with HNF4A. Post-translationally, ubiquitinated, leading to its proteasomal degradation. Deubiquitinated by USP9X. O-glycosylated; contains O-GlcNAc. O-glycosylation by OGT prevents protein degradation by inhibiting ubiquitination. It also stabilizes the CLOCK-BMAL1 heterodimer thereby increasing CLOCK-BMAL1-mediated transcription of genes in the negative loop of the circadian clock such as PER1/2/3 and CRY1/2. In terms of processing, acetylated on Lys-537 by CLOCK during the repression phase of the circadian cycle. Acetylation facilitates recruitment of CRY1 protein and initiates the repression phase of the circadian cycle. Acetylated at Lys-537 by KAT5 during the activation phase of the cycle, leading to recruitment of the positive transcription elongation factor b (P-TEFb) and BRD4, followed by productive elongation of circadian transcripts. Deacetylated by SIRT1, which may result in decreased protein stability. Post-translationally, phosphorylated upon dimerization with CLOCK. Phosphorylation enhances the transcriptional activity, alters the subcellular localization and decreases the stability of the CLOCK-BMAL1 heterodimer by promoting its degradation. Phosphorylation shows circadian variations in the liver with a peak between CT10 to CT14. Phosphorylation at Ser-90 by CK2 is essential for its nuclear localization, its interaction with CLOCK and controls CLOCK nuclear entry. Dephosphorylation at Ser-78 is important for dimerization with CLOCK and transcriptional activity. Sumoylated on Lys-259 upon dimerization with CLOCK. Predominantly conjugated to poly-SUMO2/3 rather than SUMO1 and the level of these conjugates undergo rhythmic variation, peaking at CT9-CT12. Sumoylation localizes it exclusively to the PML body and promotes its ubiquitination in the PML body, ubiquitin-dependent proteasomal degradation and the transcriptional activity of the CLOCK-BMAL1 heterodimer. In terms of processing, undergoes lysosome-mediated degradation in a time-dependent manner in the liver.

The protein resides in the nucleus. The protein localises to the cytoplasm. Its subcellular location is the PML body. Its function is as follows. Transcriptional activator which forms a core component of the circadian clock. The circadian clock, an internal time-keeping system, regulates various physiological processes through the generation of approximately 24 hour circadian rhythms in gene expression, which are translated into rhythms in metabolism and behavior. It is derived from the Latin roots 'circa' (about) and 'diem' (day) and acts as an important regulator of a wide array of physiological functions including metabolism, sleep, body temperature, blood pressure, endocrine, immune, cardiovascular, and renal function. Consists of two major components: the central clock, residing in the suprachiasmatic nucleus (SCN) of the brain, and the peripheral clocks that are present in nearly every tissue and organ system. Both the central and peripheral clocks can be reset by environmental cues, also known as Zeitgebers (German for 'timegivers'). The predominant Zeitgeber for the central clock is light, which is sensed by retina and signals directly to the SCN. The central clock entrains the peripheral clocks through neuronal and hormonal signals, body temperature and feeding-related cues, aligning all clocks with the external light/dark cycle. Circadian rhythms allow an organism to achieve temporal homeostasis with its environment at the molecular level by regulating gene expression to create a peak of protein expression once every 24 hours to control when a particular physiological process is most active with respect to the solar day. Transcription and translation of core clock components (CLOCK, NPAS2, BMAL1, BMAL2, PER1, PER2, PER3, CRY1 and CRY2) plays a critical role in rhythm generation, whereas delays imposed by post-translational modifications (PTMs) are important for determining the period (tau) of the rhythms (tau refers to the period of a rhythm and is the length, in time, of one complete cycle). A diurnal rhythm is synchronized with the day/night cycle, while the ultradian and infradian rhythms have a period shorter and longer than 24 hours, respectively. Disruptions in the circadian rhythms contribute to the pathology of cardiovascular diseases, cancer, metabolic syndromes and aging. A transcription/translation feedback loop (TTFL) forms the core of the molecular circadian clock mechanism. Transcription factors, CLOCK or NPAS2 and BMAL1 or BMAL2, form the positive limb of the feedback loop, act in the form of a heterodimer and activate the transcription of core clock genes and clock-controlled genes (involved in key metabolic processes), harboring E-box elements (5'-CACGTG-3') within their promoters. The core clock genes: PER1/2/3 and CRY1/2 which are transcriptional repressors form the negative limb of the feedback loop and interact with the CLOCK|NPAS2-BMAL1|BMAL2 heterodimer inhibiting its activity and thereby negatively regulating their own expression. This heterodimer also activates nuclear receptors NR1D1/2 and RORA/B/G, which form a second feedback loop and which activate and repress BMAL1 transcription, respectively. BMAL1 positively regulates myogenesis and negatively regulates adipogenesis via the transcriptional control of the genes of the canonical Wnt signaling pathway. Plays a role in normal pancreatic beta-cell function; regulates glucose-stimulated insulin secretion via the regulation of antioxidant genes NFE2L2/NRF2 and its targets SESN2, PRDX3, CCLC and CCLM. Negatively regulates the mTORC1 signaling pathway; regulates the expression of MTOR and DEPTOR. Controls diurnal oscillations of Ly6C inflammatory monocytes; rhythmic recruitment of the PRC2 complex imparts diurnal variation to chemokine expression that is necessary to sustain Ly6C monocyte rhythms. Regulates the expression of HSD3B2, STAR, PTGS2, CYP11A1, CYP19A1 and LHCGR in the ovary and also the genes involved in hair growth. Plays an important role in adult hippocampal neurogenesis by regulating the timely entry of neural stem/progenitor cells (NSPCs) into the cell cycle and the number of cell divisions that take place prior to cell-cycle exit. Regulates the circadian expression of CIART and KLF11. The CLOCK-BMAL1 heterodimer regulates the circadian expression of SERPINE1/PAI1, VWF, B3, CCRN4L/NOC, NAMPT, DBP, MYOD1, PPARGC1A, PPARGC1B, SIRT1, GYS2, F7, NGFR, GNRHR, BHLHE40/DEC1, ATF4, MTA1, KLF10 and also genes implicated in glucose and lipid metabolism. Promotes rhythmic chromatin opening, regulating the DNA accessibility of other transcription factors. The NPAS2-BMAL1 heterodimer positively regulates the expression of MAOA, F7 and LDHA and modulates the circadian rhythm of daytime contrast sensitivity by regulating the rhythmic expression of adenylate cyclase type 1 (ADCY1) in the retina. The preferred binding motif for the CLOCK-BMAL1 heterodimer is 5'-CACGTGA-3', which contains a flanking adenine nucleotide at the 3-prime end of the canonical 6-nucleotide E-box sequence. CLOCK specifically binds to the half-site 5'-CAC-3', while BMAL1 binds to the half-site 5'-GTGA-3'. The CLOCK-BMAL1 heterodimer also recognizes the non-canonical E-box motifs 5'-AACGTGA-3' and 5'-CATGTGA-3'. Essential for the rhythmic interaction of CLOCK with ASS1 and plays a critical role in positively regulating CLOCK-mediated acetylation of ASS1. Plays a role in protecting against lethal sepsis by limiting the expression of immune checkpoint protein CD274 in macrophages in a PKM2-dependent manner. Regulates the diurnal rhythms of skeletal muscle metabolism via transcriptional activation of genes promoting triglyceride synthesis (DGAT2) and metabolic efficiency (COQ10B). The sequence is that of Basic helix-loop-helix ARNT-like protein 1 (BMAL1) from Pongo abelii (Sumatran orangutan).